The sequence spans 778 residues: Tastin (778 aa).

Over residues M1–L11 the composition is skewed to basic and acidic residues. Residues M1–P115 are disordered. Residues S16, S98, and S170 each carry the phosphoserine modification. The interval I212–Q244 is disordered. A compositionally biased stretch (polar residues) spans A235–Q244. Phosphoserine is present on residues S324, S334, S344, and S362. T363 is modified (phosphothreonine). Position 376 is a phosphoserine (S376). 3 disordered regions span residues E406 to P425, E508 to R587, and P600 to L641. The segment covering Q513 to P523 has biased composition (pro residues). Repeat copies occupy residues P516 to Y548, P549 to C581, P582 to C614, and P615 to C647. Positions P516–C647 are 4 X 33 AA approximate tandem repeats. Residues C560 to Q574 are compositionally biased toward basic and acidic residues. Residues E612–L622 show a composition bias toward pro residues.

In terms of assembly, directly binds bystin, and indirectly trophinin. As to expression, strong expression at implantation sites. Was exclusively localized to the apical side of the syncytiotrophoblast. Also found in macrophages.

The protein resides in the cytoplasm. Could be involved with bystin and trophinin in a cell adhesion molecule complex that mediates an initial attachment of the blastocyst to uterine epithelial cells at the time of the embryo implantation. The sequence is that of Tastin (TROAP) from Homo sapiens (Human).